Here is a 418-residue protein sequence, read N- to C-terminus: Histidine--tRNA ligase (418 aa).

This sequence belongs to the class-II aminoacyl-tRNA synthetase family.

The protein localises to the cytoplasm. The enzyme catalyses tRNA(His) + L-histidine + ATP = L-histidyl-tRNA(His) + AMP + diphosphate + H(+). This chain is Histidine--tRNA ligase, found in Methanococcus aeolicus (strain ATCC BAA-1280 / DSM 17508 / OCM 812 / Nankai-3).